A 102-amino-acid chain; its full sequence is RNA-binding protein Hfq (102 aa).

Positions aspartate 9–valine 68 constitute a Sm domain. The disordered stretch occupies residues valine 63–glutamate 102. Residues histidine 70 to glutamine 96 are compositionally biased toward polar residues.

It belongs to the Hfq family. Homohexamer.

Functionally, RNA chaperone that binds small regulatory RNA (sRNAs) and mRNAs to facilitate mRNA translational regulation in response to envelope stress, environmental stress and changes in metabolite concentrations. Also binds with high specificity to tRNAs. In Salmonella arizonae (strain ATCC BAA-731 / CDC346-86 / RSK2980), this protein is RNA-binding protein Hfq.